We begin with the raw amino-acid sequence, 310 residues long: N-acetylmuramic acid 6-phosphate etherase (310 aa).

One can recognise an SIS domain in the interval 64-227 (ITARLKSKGR…STSVMIKLGK (164 aa)). E92 (proton donor) is an active-site residue. Residue E123 is part of the active site.

This sequence belongs to the GCKR-like family. MurNAc-6-P etherase subfamily. As to quaternary structure, homodimer.

The enzyme catalyses N-acetyl-D-muramate 6-phosphate + H2O = N-acetyl-D-glucosamine 6-phosphate + (R)-lactate. It participates in amino-sugar metabolism; N-acetylmuramate degradation. Its function is as follows. Specifically catalyzes the cleavage of the D-lactyl ether substituent of MurNAc 6-phosphate, producing GlcNAc 6-phosphate and D-lactate. This Prochlorococcus marinus (strain NATL1A) protein is N-acetylmuramic acid 6-phosphate etherase.